A 114-amino-acid polypeptide reads, in one-letter code: MRLKVSCTEFPIQQWVETSSLELVDSVNCVADLCHAIWMFNGGCADWRLQILKEGFTVPMTGIISQYLKTDDHIKIVKEIYPPNLPVLPFRVYTTQNTSVESELVEWEDVEMEA.

This is an uncharacterized protein from Schizosaccharomyces pombe (strain 972 / ATCC 24843) (Fission yeast).